The sequence spans 525 residues: Signal recognition particle protein (525 aa).

Residues G107 to T114, D196 to R200, and T254 to D257 each bind GTP. Residues G437–K525 are disordered. Residues S447–T467 are compositionally biased toward basic residues. Over residues G480–L497 the composition is skewed to low complexity.

This sequence belongs to the GTP-binding SRP family. SRP54 subfamily. Part of the signal recognition particle protein translocation system, which is composed of SRP and FtsY.

The protein localises to the cytoplasm. The catalysed reaction is GTP + H2O = GDP + phosphate + H(+). Functionally, involved in targeting and insertion of nascent membrane proteins into the cytoplasmic membrane. Binds to the hydrophobic signal sequence of the ribosome-nascent chain (RNC) as it emerges from the ribosomes. The SRP-RNC complex is then targeted to the cytoplasmic membrane where it interacts with the SRP receptor FtsY. This chain is Signal recognition particle protein, found in Mycobacterium bovis (strain ATCC BAA-935 / AF2122/97).